The chain runs to 411 residues: MLSLREQQLQVWFKNRRAKLARERRLQQQPQRVPGQRGRGARAAPLVPAASASAPQRGPSGILPAAEPTICSLHQAWGGPGCRAQKGIPAALSPGPGPIPAPIPGPAQIPGPLPGSIPGPIPGPAQIPSPIPAPIPGPISGPVQIPGPFRGPIPGPISGPAPIPGPISGPFSGPNPGPIPGPNPGPIPGPISGPIPGPISVPIPGPIPGPISGPISGPNPGPIPGPIPGPISGPNPGPIPGPISGPNPGLIPGPIPGPISGPGPIIGPIPSPAQIPGPGRLQGPGPILSPGRMRSPGSLPGLAPILGPGSGPGSGSVPAPIPGPGSLPAPAPLWPQSPDASDFLPDTQLFPHFTELLLPLDPLEGSSVSTMTSQYQEGDDSMGKKHSGSQPQEEGGSVNENHSGPRLLLDL.

The segment at residues 3 to 24 (SLREQQLQVWFKNRRAKLARER) is a DNA-binding region (homeobox). Disordered stretches follow at residues 20-63 (LARE…SGIL), 88-246 (IPAA…ISGP), 286-340 (PILS…SPDA), and 363-411 (LEGS…LLDL). A compositionally biased stretch (low complexity) spans 27-55 (QQQPQRVPGQRGRGARAAPLVPAASASAP). Pro residues-rich tracts occupy residues 95-139 (GPGP…PGPI) and 149-246 (FRGP…ISGP). Positions 295-307 (SPGSLPGLAPILG) are enriched in low complexity. The span at 319-335 (APIPGPGSLPAPAPLWP) shows a compositional bias: pro residues. Composition is skewed to polar residues over residues 366–376 (SSVSTMTSQYQ) and 388–402 (GSQPQEEGGSVNENH).

It belongs to the paired homeobox family.

Its subcellular location is the nucleus. Its function is as follows. Transcription factor expressed after fertilization required for zygotic genome activation (ZGA), a critical event in early embryonic development during which the developmental control passes from maternally provided mRNAs to the expression of the zygotic genome after fertilization. Binds and activates expression of key ZGA marker genes, such as NANOGNB, ZSCAN4, DUXB, KLF5 and DPPA3. Binds to regulatory DNA sequences containing a 5'-TAATCC-3' sequence motif. This is Tetra-peptide repeat homeobox protein 1 from Homo sapiens (Human).